The primary structure comprises 226 residues: uncharacterized protein (226 aa).

A coiled-coil region spans residues 121–163; the sequence is TVDELIKTIEKELNKVKKSRKNREKKTNEVEEIIEELIEEDDI.

This is an uncharacterized protein from Methanocaldococcus jannaschii (strain ATCC 43067 / DSM 2661 / JAL-1 / JCM 10045 / NBRC 100440) (Methanococcus jannaschii).